We begin with the raw amino-acid sequence, 301 residues long: MRHLLDFQGWTRPEVESLLDTARVMREVLERPVKKVPALQGFTVATVFFEPSTRTRISFELAARRMSADVVSFAAQTSSLQKGESYKDTLLTLEAMGVDAYVIRADSAGVPHQATRWVKGAVINGGDGRRAHPTQALLDAYTLLEALGTLEGKKVAIVGDILHSRVARSNAELLPLLGAQVFCAGPPSLLPQSLPGAHLTPRLEEALEEADAVMVLRLQKERMEAGLVHLEDYIARYQVTEKRLALAKPQAPLLHPGPMNRDVELEGTLADSARSLVNRQVQNGVAVRMAVLYHLLVGKGR.

Arginine 54 and threonine 55 together coordinate carbamoyl phosphate. An L-aspartate-binding site is contributed by lysine 82. Carbamoyl phosphate contacts are provided by arginine 104, histidine 132, and glutamine 135. Residues arginine 165 and arginine 217 each contribute to the L-aspartate site. Carbamoyl phosphate-binding residues include glycine 257 and proline 258.

It belongs to the aspartate/ornithine carbamoyltransferase superfamily. ATCase family. As to quaternary structure, heterododecamer (2C3:3R2) of six catalytic PyrB chains organized as two trimers (C3), and six regulatory PyrI chains organized as three dimers (R2).

It catalyses the reaction carbamoyl phosphate + L-aspartate = N-carbamoyl-L-aspartate + phosphate + H(+). The protein operates within pyrimidine metabolism; UMP biosynthesis via de novo pathway; (S)-dihydroorotate from bicarbonate: step 2/3. Catalyzes the condensation of carbamoyl phosphate and aspartate to form carbamoyl aspartate and inorganic phosphate, the committed step in the de novo pyrimidine nucleotide biosynthesis pathway. This Thermus aquaticus protein is Aspartate carbamoyltransferase catalytic subunit.